Here is a 49-residue protein sequence, read N- to C-terminus: Putative DNA-directed RNA polymerase subunit omega (49 aa).

This sequence belongs to the RNA polymerase subunit omega family.

The protein resides in the plastid. It localises to the chloroplast. It carries out the reaction RNA(n) + a ribonucleoside 5'-triphosphate = RNA(n+1) + diphosphate. Its function is as follows. May be involved in RNA polymerase activity. This chain is Putative DNA-directed RNA polymerase subunit omega (rpoZ), found in Cyanidioschyzon merolae (strain NIES-3377 / 10D) (Unicellular red alga).